The sequence spans 141 residues: Hemoglobin subunit alpha-D (141 aa).

Residues 1-141 (MLNAEDKKLI…VSAVLAEKYR (141 aa)) enclose the Globin domain. Positions 58 and 87 each coordinate heme b.

It belongs to the globin family. As to quaternary structure, heterotetramer of two alpha-D chains and two beta chains. In terms of tissue distribution, red blood cells.

Its function is as follows. Involved in oxygen transport from the lung to the various peripheral tissues. The chain is Hemoglobin subunit alpha-D (HBAD) from Phasianus colchicus colchicus (Black-necked pheasant).